A 159-amino-acid chain; its full sequence is Large ribosomal subunit protein mL43 (159 aa).

The disordered stretch occupies residues 123 to 159 (SPSIQGQWHPFTNKPTALGGLRPREVQNPAPTQRPAQ).

It belongs to the mitochondrion-specific ribosomal protein mL43 family. In terms of assembly, component of the mitochondrial ribosome large subunit (39S) which comprises a 16S rRNA and about 50 distinct proteins.

It localises to the mitochondrion. The protein is Large ribosomal subunit protein mL43 (MRPL43) of Bos taurus (Bovine).